The sequence spans 361 residues: Peptidyl-prolyl cis-trans isomerase CYP40 (361 aa).

One can recognise a PPIase cyclophilin-type domain in the interval 7–172; sequence FMDISIGGEL…QDVVIHDCGE (166 aa). 2 TPR repeats span residues 212 to 245 and 298 to 331; these read VDFV…LDIC and VKAL…EPND.

The protein belongs to the cyclophilin-type PPIase family. In terms of tissue distribution, expressed at low levels in seedlings, roots, shoots, leaves, stems, inflorescences, flowers and siliques, with highest levels dividing tissues.

The protein localises to the cytoplasm. It catalyses the reaction [protein]-peptidylproline (omega=180) = [protein]-peptidylproline (omega=0). With respect to regulation, binds cyclosporin A (CsA). CsA mediates some of its effects via an inhibitory action on PPIase. Functionally, PPIases accelerate the folding of proteins. It catalyzes the cis-trans isomerization of proline imidic peptide bonds in oligopeptides. Involved in promoting the expression of the juvenile phase of vegetative development, and, to a lower extent, in regulating the positioning of floral buds, floral morphogenesis and the expression of HSPs. Collaboratively with RBL and ULT1, influences floral meristem (FM) determinacy in an AGAMOUS and SUPERMAN-dependent manner, thus contributing to the floral developmental homeostasis. This Arabidopsis thaliana (Mouse-ear cress) protein is Peptidyl-prolyl cis-trans isomerase CYP40.